We begin with the raw amino-acid sequence, 155 residues long: Ribosome maturation factor RimP (155 aa).

The protein belongs to the RimP family.

The protein localises to the cytoplasm. Functionally, required for maturation of 30S ribosomal subunits. The polypeptide is Ribosome maturation factor RimP (Prochlorococcus marinus (strain MIT 9211)).